A 222-amino-acid chain; its full sequence is Hexitol phosphatase B (222 aa).

The Nucleophile role is filled by aspartate 13. Residues aspartate 13 and aspartate 15 each contribute to the a divalent metal cation site. Residues 13–15, 115–116, and lysine 148 contribute to the substrate site; these read DMD and SA. Aspartate 15 serves as the catalytic Proton donor. Aspartate 173 lines the a divalent metal cation pocket.

Belongs to the HAD-like hydrolase superfamily. CbbY/CbbZ/Gph/YieH family. The cofactor is Mg(2+). Requires Mn(2+) as cofactor. Co(2+) serves as cofactor. Zn(2+) is required as a cofactor.

It carries out the reaction sugar phosphate + H2O = sugar + phosphate.. The catalysed reaction is 2-deoxy-D-glucose 6-phosphate + H2O = 2-deoxy-D-glucose + phosphate. The enzyme catalyses D-mannitol 1-phosphate + H2O = D-mannitol + phosphate. It catalyses the reaction D-sorbitol 6-phosphate + H2O = D-sorbitol + phosphate. Sugar-phosphate phosphohydrolase that catalyzes the dephosphorylation of D-mannitol 1-phosphate and D-sorbitol 6-phosphate. Also catalyzes the dephosphorylation of 2-deoxyglucose 6-phosphate (2dGlu6P); this is a biologically important activity in vivo since it contributes to the elimination of this toxic compound and plays an important role in the resistance of E.coli to 2-deoxyglucose. To a lesser extent, is also able to dephosphorylate mannose 6-phosphate (Man6P), erythrose-4-phosphate, 2-deoxyribose-5-phosphate (2dRib5P), ribose-5-phosphate (Rib5P) and glucose-6-phosphate (Glu6P) in vitro. The chain is Hexitol phosphatase B from Escherichia coli (strain K12).